The chain runs to 518 residues: Putative transposase for insertion sequence IS408 (518 aa).

Positions 11–94 constitute an HTH IS408-type domain; that stretch reads LKEVLRLKWA…PDYTALHREL (84 aa). Residues 23-44 constitute a DNA-binding region (H-T-H motif); sequence LTHRQISRAIGISVGAVSKFAA. In terms of domain architecture, Integrase catalytic spans 140-335; sequence QQHRAGEKLF…LPVRRYEIAT (196 aa). The interval 496 to 518 is disordered; sequence LPTTPAEWRSPEHENVRGPDYYH. The span at 504–518 shows a compositional bias: basic and acidic residues; sequence RSPEHENVRGPDYYH.

The protein belongs to the transposase IS21/IS408/IS1162 family.

Required for the transposition of the insertion element. The chain is Putative transposase for insertion sequence IS408 from Burkholderia multivorans (strain ATCC 17616 / 249).